Consider the following 697-residue polypeptide: Elongation factor G (697 aa).

The tr-type G domain occupies 6-281 (ENIRNIGICA…AVVDYLPSPI (276 aa)). Residues 15–22 (AHIDAGKT), 79–83 (DTPGH), and 133–136 (NKMD) contribute to the GTP site.

It belongs to the TRAFAC class translation factor GTPase superfamily. Classic translation factor GTPase family. EF-G/EF-2 subfamily.

The protein resides in the cytoplasm. Functionally, catalyzes the GTP-dependent ribosomal translocation step during translation elongation. During this step, the ribosome changes from the pre-translocational (PRE) to the post-translocational (POST) state as the newly formed A-site-bound peptidyl-tRNA and P-site-bound deacylated tRNA move to the P and E sites, respectively. Catalyzes the coordinated movement of the two tRNA molecules, the mRNA and conformational changes in the ribosome. The polypeptide is Elongation factor G (Rickettsia bellii (strain OSU 85-389)).